The following is a 360-amino-acid chain: Isopentenyl-diphosphate delta-isomerase (360 aa).

Position 12–13 (12–13) interacts with substrate; that stretch reads RK. Residues Ser-70, 71 to 73, Ser-101, and Asn-130 each bind FMN; that span reads SMT. 101–103 is a binding site for substrate; sequence SMR. Gln-165 is a substrate binding site. Glu-166 contributes to the Mg(2+) binding site. Residues Lys-197, 288–290, and 309–310 contribute to the FMN site; these read GIR and AG.

Belongs to the IPP isomerase type 2 family. Homooctamer. Dimer of tetramers. It depends on FMN as a cofactor. NADPH is required as a cofactor. Requires Mg(2+) as cofactor.

The protein localises to the cytoplasm. It carries out the reaction isopentenyl diphosphate = dimethylallyl diphosphate. Involved in the biosynthesis of isoprenoids. Catalyzes the 1,3-allylic rearrangement of the homoallylic substrate isopentenyl (IPP) to its allylic isomer, dimethylallyl diphosphate (DMAPP). This is Isopentenyl-diphosphate delta-isomerase from Chlorobium limicola (strain DSM 245 / NBRC 103803 / 6330).